Consider the following 410-residue polypeptide: Gamma-glutamyl phosphate reductase (410 aa).

This sequence belongs to the gamma-glutamyl phosphate reductase family.

It localises to the cytoplasm. The enzyme catalyses L-glutamate 5-semialdehyde + phosphate + NADP(+) = L-glutamyl 5-phosphate + NADPH + H(+). Its pathway is amino-acid biosynthesis; L-proline biosynthesis; L-glutamate 5-semialdehyde from L-glutamate: step 2/2. Functionally, catalyzes the NADPH-dependent reduction of L-glutamate 5-phosphate into L-glutamate 5-semialdehyde and phosphate. The product spontaneously undergoes cyclization to form 1-pyrroline-5-carboxylate. This is Gamma-glutamyl phosphate reductase from Sulfurovum sp. (strain NBC37-1).